The sequence spans 119 residues: Ribonuclease P protein component (119 aa).

Belongs to the RnpA family. Consists of a catalytic RNA component (M1 or rnpB) and a protein subunit.

The catalysed reaction is Endonucleolytic cleavage of RNA, removing 5'-extranucleotides from tRNA precursor.. In terms of biological role, RNaseP catalyzes the removal of the 5'-leader sequence from pre-tRNA to produce the mature 5'-terminus. It can also cleave other RNA substrates such as 4.5S RNA. The protein component plays an auxiliary but essential role in vivo by binding to the 5'-leader sequence and broadening the substrate specificity of the ribozyme. The protein is Ribonuclease P protein component of Syntrophus aciditrophicus (strain SB).